The sequence spans 397 residues: Nicotinate phosphoribosyltransferase (397 aa).

His-221 bears the Phosphohistidine; by autocatalysis mark.

This sequence belongs to the NAPRTase family. In terms of processing, transiently phosphorylated on a His residue during the reaction cycle. Phosphorylation strongly increases the affinity for substrates and increases the rate of nicotinate D-ribonucleotide production. Dephosphorylation regenerates the low-affinity form of the enzyme, leading to product release.

The catalysed reaction is nicotinate + 5-phospho-alpha-D-ribose 1-diphosphate + ATP + H2O = nicotinate beta-D-ribonucleotide + ADP + phosphate + diphosphate. The protein operates within cofactor biosynthesis; NAD(+) biosynthesis; nicotinate D-ribonucleotide from nicotinate: step 1/1. Its function is as follows. Catalyzes the synthesis of beta-nicotinate D-ribonucleotide from nicotinate and 5-phospho-D-ribose 1-phosphate at the expense of ATP. The chain is Nicotinate phosphoribosyltransferase from Herminiimonas arsenicoxydans.